We begin with the raw amino-acid sequence, 477 residues long: Trigger factor (477 aa).

Residues 169–254 (EDRVTIDYLG…VKEVAKPNEL (86 aa)) form the PPIase FKBP-type domain. The disordered stretch occupies residues 435-477 (VSKEELTAEDEDAASEAKPAKKAAPKKKAAPKKKADEGKSEEA). Over residues 454–466 (AKKAAPKKKAAPK) the composition is skewed to basic residues. Over residues 467–477 (KKADEGKSEEA) the composition is skewed to basic and acidic residues.

It belongs to the FKBP-type PPIase family. Tig subfamily.

It localises to the cytoplasm. The catalysed reaction is [protein]-peptidylproline (omega=180) = [protein]-peptidylproline (omega=0). Its function is as follows. Involved in protein export. Acts as a chaperone by maintaining the newly synthesized protein in an open conformation. Functions as a peptidyl-prolyl cis-trans isomerase. This Brucella anthropi (strain ATCC 49188 / DSM 6882 / CCUG 24695 / JCM 21032 / LMG 3331 / NBRC 15819 / NCTC 12168 / Alc 37) (Ochrobactrum anthropi) protein is Trigger factor.